The chain runs to 349 residues: 3'-5' exoribonuclease 1 (349 aa).

Composition is skewed to basic and acidic residues over residues 1–10 and 22–35; these read MEDPQSKEPA and PRPE…RPSP. Positions 1–48 are disordered; sequence MEDPQSKEPAGEAVALALLESPRPEGGEEPPRPSPEETQQCKFDGQET. Phosphoserine occurs at positions 59 and 62. One can recognise an SAP domain in the interval 76-110; sequence INRMSKEELRAKLSEFKLETRGVKDVLKKRLKNYY. An Exonuclease domain is found at 130–306; sequence ICIIDFEATC…DDSKNIARIA (177 aa). Mg(2+)-binding residues include aspartate 134 and glutamate 136. The active-site Proton acceptor is the glutamate 136. AMP contacts are provided by glutamate 136 and alanine 137. Aspartate 234 is a Mg(2+) binding site. Catalysis depends on histidine 293, which acts as the Proton acceptor. Histidine 293 is a binding site for AMP. Aspartate 298 contributes to the Mg(2+) binding site.

As to quaternary structure, identified in a histone pre-mRNA complex, at least composed of ERI1, LSM11, SLBP, SNRPB, SYNCRIP and YBX1. Interacts in a cooperative manner with SLBP to the mature 3'-end of histone mRNAs. Binds to 40S and 60S ribosomal subunits and to 80S assembled ribosomes. Found in a ternary complex with SLBP and the stem-loop structure of the 3'-end of histone mRNAs. Mg(2+) is required as a cofactor.

The protein resides in the cytoplasm. The protein localises to the nucleus. It localises to the nucleolus. The enzyme catalyses Exonucleolytic cleavage in the 3'- to 5'-direction to yield nucleoside 5'-phosphates.. With respect to regulation, although it can bind simultaneously with SLBP to the 3'-end of histone mRNA, the presence of SLBP prevents the exonuclease activity. RNA exonuclease that binds to the 3'-end of histone mRNAs and degrades them, suggesting that it plays an essential role in histone mRNA decay after replication. A 2' and 3'-hydroxyl groups at the last nucleotide of the histone 3'-end is required for efficient 3'-end histone mRNA exonuclease activity and degradation of RNA substrates. Also able to degrade the 3'-overhangs of short interfering RNAs (siRNAs) in vitro, suggesting a possible role as regulator of RNA interference (RNAi). Required for binding the 5'-ACCCA-3' sequence present in stem-loop structure. Able to bind other mRNAs. Required for 5.8S rRNA 3'-end processing. Also binds to 5.8s ribosomal RNA. Binds with high affinity to the stem-loop structure of replication-dependent histone pre-mRNAs. In vitro, does not have sequence specificity. In vitro, has weak DNA exonuclease activity. In vitro, shows biphasic kinetics such that there is rapid hydrolysis of the last three unpaired RNA nucleotides in the 39 flanking sequence followed by a much slower cleavage through the stem that occurs over a longer incubation period in the order of hours. ERI1-mediated RNA metabolism plays a key role in chondrogenesis. The polypeptide is 3'-5' exoribonuclease 1 (Homo sapiens (Human)).